We begin with the raw amino-acid sequence, 327 residues long: MSKNFQEPIFDVAQLAHVELLSPKLEESIVFFTKYLGMEVTARAGNSVYLRAYEDFYHNTLKITESAEAGLGHVGWRASSPQALERRVLELEKSGLGRGWIDGDIGHGKAYQFTTPDGHQMEIFFEVEYYKPQPEQKTKLLNRPSKRPAQGVPVRRLDHINLMTSNPGVDTQFMIDTLGFRLREQIRDKGKILGSWISVSNLVHEIAFMQEPNQEKGKLHHLCYWYGIPQNLYDLADLLKDHEYFIEVPPNKHGISQAFCMYVYEPGGNRIELFGDAGYLITDPTWEPVIWEMEDVPGNGDTWIGTAFPDSWWLRGTPVTTKEVVKP.

2 consecutive VOC domains span residues 14–126 (QLAH…IFFE) and 156–276 (RLDH…LFGD). Fe cation is bound by residues His-159, His-221, and Glu-272.

The protein belongs to the extradiol ring-cleavage dioxygenase family. Fe(2+) serves as cofactor.

The catalysed reaction is catechol + O2 = (2Z,4E)-2-hydroxy-6-oxohexa-2,4-dienoate + H(+). This Geobacillus stearothermophilus (Bacillus stearothermophilus) protein is Metapyrocatechase (pheB).